The chain runs to 144 residues: Grifin (144 aa).

In terms of domain architecture, Galectin spans 5-133 (FEAFCAGGLA…EHRLAQVELA (129 aa)). At Ser-138 the chain carries Phosphoserine.

In terms of assembly, homodimer.

The chain is Grifin (Grifin) from Mus musculus (Mouse).